Here is a 779-residue protein sequence, read N- to C-terminus: Acyl-CoA dehydrogenase family member 11 (779 aa).

Residues Lys-163, Lys-166, and Lys-175 each carry the N6-acetyllysine modification. Ser-210 bears the Phosphoserine mark. Tyr-323 bears the Phosphotyrosine mark. Residues Lys-368 and Lys-390 each carry the N6-succinyllysine modification. Residues 503–513, 511–513, 537–539, and Ser-539 each bind FAD; these read FCMTEPNVSSS, SSS, and WSS. Residue Ser-513 coordinates substrate. 628–631 serves as a coordination point for substrate; sequence GPGR. Residues Arg-656, Gln-726, and 726–730 contribute to the FAD site; that span reads QVHGG. Gly-754 is a substrate binding site. FAD contacts are provided by residues 755-757 and Glu-757; that span reads PDE. Lys-765 bears the N6-acetyllysine mark.

This sequence belongs to the acyl-CoA dehydrogenase family. Homodimer. The cofactor is FAD.

It is found in the peroxisome. Its subcellular location is the mitochondrion membrane. It carries out the reaction a 2,3-saturated acyl-CoA + oxidized [electron-transfer flavoprotein] + H(+) = a (2E)-enoyl-CoA + reduced [electron-transfer flavoprotein]. It catalyses the reaction docosanoyl-CoA + oxidized [electron-transfer flavoprotein] + H(+) = (2E)-docosenoyl-CoA + reduced [electron-transfer flavoprotein]. The catalysed reaction is tetracosanoyl-CoA + oxidized [electron-transfer flavoprotein] + H(+) = (2E)-tetracosenoyl-CoA + reduced [electron-transfer flavoprotein]. The enzyme catalyses eicosanoyl-CoA + oxidized [electron-transfer flavoprotein] + H(+) = (2E)-eicosenoyl-CoA + reduced [electron-transfer flavoprotein]. It carries out the reaction hexacosanoyl-CoA + oxidized [electron-transfer flavoprotein] + H(+) = (2E)-hexacosenoyl-CoA + reduced [electron-transfer flavoprotein]. It catalyses the reaction tricosanoyl-CoA + oxidized [electron-transfer flavoprotein] + H(+) = (2E)-tricosenoyl-CoA + reduced [electron-transfer flavoprotein]. Its pathway is lipid metabolism; fatty acid beta-oxidation. Its function is as follows. Acyl-CoA dehydrogenase, that exhibits maximal activity towards saturated C22-CoA. Probably participates in beta-oxydation and energy production but could also play a role in the metabolism of specific fatty acids to control fatty acids composition of cellular lipids in brain. The protein is Acyl-CoA dehydrogenase family member 11 (Acad11) of Mus musculus (Mouse).